We begin with the raw amino-acid sequence, 614 residues long: Translation initiation factor IF-2 (614 aa).

Residues Ala-115 to Tyr-283 enclose the tr-type G domain. The interval Gly-124 to Thr-131 is G1. Gly-124–Thr-131 contributes to the GTP binding site. The interval Gly-149–His-153 is G2. The G3 stretch occupies residues Asp-170–Gly-173. GTP is bound by residues Asp-170 to His-174 and Asn-224 to Asp-227. Residues Asn-224–Asp-227 are G4. The interval Ser-260–Leu-262 is G5.

This sequence belongs to the TRAFAC class translation factor GTPase superfamily. Classic translation factor GTPase family. IF-2 subfamily.

The protein resides in the cytoplasm. Its function is as follows. One of the essential components for the initiation of protein synthesis. Protects formylmethionyl-tRNA from spontaneous hydrolysis and promotes its binding to the 30S ribosomal subunits. Also involved in the hydrolysis of GTP during the formation of the 70S ribosomal complex. The sequence is that of Translation initiation factor IF-2 from Ureaplasma urealyticum serovar 10 (strain ATCC 33699 / Western).